The primary structure comprises 749 residues: Protein Niban 2 (749 aa).

A lipid anchor (N-myristoyl glycine) is attached at Gly-2. Residues 68-192 (RIIFSGNLFQ…WQAVLQDCVR (125 aa)) enclose the PH domain. 11 positions are modified to phosphoserine: Ser-568, Ser-574, Ser-607, Ser-628, Ser-647, Ser-650, Ser-669, Ser-674, Ser-685, Ser-695, and Ser-699. Residues 589 to 749 (WGEQYGDSGD…EDSAGVQTEF (161 aa)) form a disordered region. Over residues 710-719 (VDLEPPKPSD) the composition is skewed to basic and acidic residues. Over residues 723 to 749 (GEQVSSPGSRPPIHTTTEDSAGVQTEF) the composition is skewed to polar residues.

The protein belongs to the Niban family. In terms of processing, as apoptosis proceeds, degraded via an proteasome-independent pathway, probably by caspases.

The protein localises to the cytoplasm. The protein resides in the cytosol. It is found in the cell junction. It localises to the adherens junction. Its subcellular location is the membrane. Functionally, may play a role in apoptosis suppression. The polypeptide is Protein Niban 2 (Mus musculus (Mouse)).